The primary structure comprises 102 residues: 10 kDa heat shock protein, mitochondrial (102 aa).

The protein belongs to the GroES chaperonin family. In terms of assembly, homohexamer.

It localises to the mitochondrion matrix. Eukaryotic CPN10 homolog which is essential for mitochondrial protein biogenesis, together with CPN60. Binds to CPN60 in the presence of Mg-ATP and suppresses the ATPase activity of the latter. This Schistosoma japonicum (Blood fluke) protein is 10 kDa heat shock protein, mitochondrial.